The primary structure comprises 287 residues: Bifunctional protein FolD (287 aa).

NADP(+) contacts are provided by residues Gly166 to Ser168, Ser191, and Ile232.

It belongs to the tetrahydrofolate dehydrogenase/cyclohydrolase family. As to quaternary structure, homodimer.

It catalyses the reaction (6R)-5,10-methylene-5,6,7,8-tetrahydrofolate + NADP(+) = (6R)-5,10-methenyltetrahydrofolate + NADPH. The enzyme catalyses (6R)-5,10-methenyltetrahydrofolate + H2O = (6R)-10-formyltetrahydrofolate + H(+). The protein operates within one-carbon metabolism; tetrahydrofolate interconversion. Functionally, catalyzes the oxidation of 5,10-methylenetetrahydrofolate to 5,10-methenyltetrahydrofolate and then the hydrolysis of 5,10-methenyltetrahydrofolate to 10-formyltetrahydrofolate. In Haemophilus ducreyi (strain 35000HP / ATCC 700724), this protein is Bifunctional protein FolD.